Reading from the N-terminus, the 153-residue chain is Ribonuclease H (153 aa).

The 142-residue stretch at 1 to 142 (MLKTIKIFSD…CDHLARESAK (142 aa)) folds into the RNase H type-1 domain. Asp10, Glu48, Asp70, and Asp134 together coordinate Mg(2+).

The protein belongs to the RNase H family. In terms of assembly, monomer. The cofactor is Mg(2+).

The protein resides in the cytoplasm. It catalyses the reaction Endonucleolytic cleavage to 5'-phosphomonoester.. In terms of biological role, endonuclease that specifically degrades the RNA of RNA-DNA hybrids. The sequence is that of Ribonuclease H from Buchnera aphidicola subsp. Baizongia pistaciae (strain Bp).